A 125-amino-acid polypeptide reads, in one-letter code: Translation initiation factor 5A (125 aa).

A Hypusine modification is found at K35.

This sequence belongs to the eIF-5A family.

It is found in the cytoplasm. Functionally, functions by promoting the formation of the first peptide bond. This is Translation initiation factor 5A (eIF5A) from Methanosphaerula palustris (strain ATCC BAA-1556 / DSM 19958 / E1-9c).